The chain runs to 138 residues: MARPVKVCELAHHLNIPIWEVLLPCNFCTGFLTYQELLEFDYKDFNLLWKDGFVFGCCAACAYRSAYHEFTNYHQEIVVGIEIEGRAAANIAEIVVRCLICLKRLDLLEKLDICAQHREFHRVRNRWKGVCRHCRVIE.

2 zinc fingers span residues Cys-25–Cys-61 and Cys-98–Cys-134.

This sequence belongs to the papillomaviridae E6 protein family. In terms of assembly, forms homodimers. Interacts with ubiquitin-protein ligase UBE3A/E6-AP; this interaction stimulates UBE3A ubiquitin activity. Interacts with host BAK1.

Its subcellular location is the host cytoplasm. The protein resides in the host nucleus. Its function is as follows. Plays a major role in the induction and maintenance of cellular transformation. E6 associates with host UBE3A/E6-AP ubiquitin-protein ligase and modulates its activity. Protects host keratinocytes from apoptosis by mediating the degradation of host BAK1. May also inhibit host immune response. The sequence is that of Protein E6 from Homo sapiens (Human).